The primary structure comprises 119 residues: MAKIKKGDLVQVITGAKAERGGDRGKQGKVLRVFPDTNRVLVEGINRVTKHTKVGQSQRGTKTGGIEVVEASIHISNVALVDPSTKKPTRVGFRTETVERNGKKREVRVRVAKSSGKDI.

It belongs to the universal ribosomal protein uL24 family. In terms of assembly, part of the 50S ribosomal subunit.

One of two assembly initiator proteins, it binds directly to the 5'-end of the 23S rRNA, where it nucleates assembly of the 50S subunit. Functionally, one of the proteins that surrounds the polypeptide exit tunnel on the outside of the subunit. The polypeptide is Large ribosomal subunit protein uL24 (Arthrobacter sp. (strain FB24)).